The primary structure comprises 357 residues: Phenylalanine--tRNA ligase alpha subunit (357 aa).

Glutamate 259 is a Mg(2+) binding site.

This sequence belongs to the class-II aminoacyl-tRNA synthetase family. Phe-tRNA synthetase alpha subunit type 1 subfamily. Tetramer of two alpha and two beta subunits. Requires Mg(2+) as cofactor.

It localises to the cytoplasm. The catalysed reaction is tRNA(Phe) + L-phenylalanine + ATP = L-phenylalanyl-tRNA(Phe) + AMP + diphosphate + H(+). The chain is Phenylalanine--tRNA ligase alpha subunit from Jannaschia sp. (strain CCS1).